A 262-amino-acid polypeptide reads, in one-letter code: Ribosomal RNA small subunit methyltransferase A (262 aa).

S-adenosyl-L-methionine contacts are provided by His16, Leu18, Gly43, Glu64, Asp89, and Asn109.

This sequence belongs to the class I-like SAM-binding methyltransferase superfamily. rRNA adenine N(6)-methyltransferase family. RsmA subfamily.

The protein localises to the cytoplasm. The enzyme catalyses adenosine(1518)/adenosine(1519) in 16S rRNA + 4 S-adenosyl-L-methionine = N(6)-dimethyladenosine(1518)/N(6)-dimethyladenosine(1519) in 16S rRNA + 4 S-adenosyl-L-homocysteine + 4 H(+). Functionally, specifically dimethylates two adjacent adenosines (A1518 and A1519) in the loop of a conserved hairpin near the 3'-end of 16S rRNA in the 30S particle. May play a critical role in biogenesis of 30S subunits. This is Ribosomal RNA small subunit methyltransferase A from Xanthomonas euvesicatoria pv. vesicatoria (strain 85-10) (Xanthomonas campestris pv. vesicatoria).